Here is a 180-residue protein sequence, read N- to C-terminus: Ubiquitin-conjugating enzyme E2 20 (180 aa).

The segment at 1 to 33 (MAAVNGYQGNTPADPPASNGSKQPAAPTKTVDS) is disordered. One can recognise a UBC core domain in the interval 35–180 (SVLKRLQSEL…VEKLYKPPSA (146 aa)). Cys119 serves as the catalytic Glycyl thioester intermediate.

The protein belongs to the ubiquitin-conjugating enzyme family. In terms of tissue distribution, expressed in all tissues with cell division activities and in mature leaves.

It catalyses the reaction S-ubiquitinyl-[E1 ubiquitin-activating enzyme]-L-cysteine + [E2 ubiquitin-conjugating enzyme]-L-cysteine = [E1 ubiquitin-activating enzyme]-L-cysteine + S-ubiquitinyl-[E2 ubiquitin-conjugating enzyme]-L-cysteine.. It participates in protein modification; protein ubiquitination. Its function is as follows. Accepts the ubiquitin from the E1 complex and catalyzes its covalent attachment to other proteins. The chain is Ubiquitin-conjugating enzyme E2 20 (UBC20) from Arabidopsis thaliana (Mouse-ear cress).